Here is a 400-residue protein sequence, read N- to C-terminus: Large envelope protein (400 aa).

Met1 bears the N-acetylmethionine mark. Gly2 carries the N-myristoyl glycine; by host lipid modification. The tract at residues 2–119 (GGRLPKPRKG…PPLRDSHPQA (118 aa)) is pre-S1. The interval 2–174 (GGRLPKPRKG…SSRIGDPAPT (173 aa)) is pre-S. Topologically, residues 2–181 (GGRLPKPRKG…APTMENITSG (180 aa)) are virion surface; in external conformation. At 2 to 253 (GGRLPKPRKG…PGYRWMCLRR (252 aa)) the chain is on the intravirion; in internal conformation side. N-linked (GlcNAc...) asparagine glycosylation is present at Arg4. The interval 84–116 (TLTTVPAVPPPASTNRQSGRQPTPISPPLRDSH) is disordered. Over residues 96 to 106 (STNRQSGRQPT) the composition is skewed to polar residues. Positions 120–174 (MQWNSTKFHQTLQDPRVRGLYFPAGGSSSGTVNPAPNIASHISSISSRIGDPAPT) are pre-S2. The chain crosses the membrane as a helical span at residues 182-202 (FLGPLLVLQAGFFLLTRILTI). The Intravirion; in external conformation segment spans residues 203 to 253 (PQSLDSWWTSLNFLGEAPVCLGQNSQSPTSNHSPTSCPPICPGYRWMCLRR). The chain crosses the membrane as a helical span at residues 254 to 274 (FIIFLFILLLCLIFLLVLLDC). The Virion surface segment spans residues 275–348 (QGMLPVCPLI…WASVRFSWLS (74 aa)). The N-linked (GlcNAc...) asparagine; by host glycan is linked to Asn320. Residues 349–369 (LLVPFVQWFVGLSPTVWLSVI) traverse the membrane as a helical segment. Over 370–375 (WMMWYW) the chain is Intravirion. Residues 376–398 (GPSLYNILSPFIPLLPIFFCLWV) traverse the membrane as a helical segment. Topologically, residues 399–400 (YI) are virion surface.

This sequence belongs to the orthohepadnavirus major surface antigen family. As to quaternary structure, in its internal form (Li-HBsAg), interacts with the capsid protein and with the isoform S. Interacts with host chaperone CANX. Associates with host chaperone CANX through its pre-S2 N glycan; this association may be essential for isoform M proper secretion. In terms of assembly, interacts with isoform L. Interacts with the antigens of satellite virus HDV (HDVAgs); this interaction is required for encapsidation of HDV genomic RNA. Post-translationally, isoform M is N-terminally acetylated by host at a ratio of 90%, and N-glycosylated by host at the pre-S2 region. Myristoylated.

It localises to the virion membrane. Its function is as follows. The large envelope protein exists in two topological conformations, one which is termed 'external' or Le-HBsAg and the other 'internal' or Li-HBsAg. In its external conformation the protein attaches the virus to cell receptors and thereby initiating infection. This interaction determines the species specificity and liver tropism. This attachment induces virion internalization predominantly through caveolin-mediated endocytosis. The large envelope protein also assures fusion between virion membrane and endosomal membrane. In its internal conformation the protein plays a role in virion morphogenesis and mediates the contact with the nucleocapsid like a matrix protein. In terms of biological role, the middle envelope protein plays an important role in the budding of the virion. It is involved in the induction of budding in a nucleocapsid independent way. In this process the majority of envelope proteins bud to form subviral lipoprotein particles of 22 nm of diameter that do not contain a nucleocapsid. In Hepatitis B virus genotype A3 (isolate Cameroon/CMR711/1994) (HBV-A), this protein is Large envelope protein.